Consider the following 438-residue polypeptide: 3-phosphoshikimate 1-carboxyvinyltransferase (438 aa).

The 3-phosphoshikimate site is built by Lys-25, Ser-26, and Arg-30. Residue Lys-25 coordinates phosphoenolpyruvate. 2 residues coordinate phosphoenolpyruvate: Gly-99 and Arg-128. 4 residues coordinate 3-phosphoshikimate: Ser-173, Gln-175, Asp-325, and Lys-352. Residue Gln-175 coordinates phosphoenolpyruvate. The active-site Proton acceptor is Asp-325. Phosphoenolpyruvate is bound by residues Arg-356 and Arg-398.

It belongs to the EPSP synthase family. As to quaternary structure, monomer.

It localises to the cytoplasm. The enzyme catalyses 3-phosphoshikimate + phosphoenolpyruvate = 5-O-(1-carboxyvinyl)-3-phosphoshikimate + phosphate. The protein operates within metabolic intermediate biosynthesis; chorismate biosynthesis; chorismate from D-erythrose 4-phosphate and phosphoenolpyruvate: step 6/7. Catalyzes the transfer of the enolpyruvyl moiety of phosphoenolpyruvate (PEP) to the 5-hydroxyl of shikimate-3-phosphate (S3P) to produce enolpyruvyl shikimate-3-phosphate and inorganic phosphate. This Prochlorococcus marinus (strain MIT 9515) protein is 3-phosphoshikimate 1-carboxyvinyltransferase.